Here is a 475-residue protein sequence, read N- to C-terminus: Ras-GEF domain-containing family member 1A (475 aa).

Residues 33 to 164 form the N-terminal Ras-GEF domain; it reads QDGSLVSGSL…SISQMTQNVL (132 aa). Residues 208–455 enclose the Ras-GEF domain; it reads DPLILAQQLT…FLASFENEGP (248 aa).

Its function is as follows. Guanine nucleotide exchange factor (GEF) with specificity for rap2a and other Ras family proteins (in vitro). Plays a role in cell migration. In Xenopus tropicalis (Western clawed frog), this protein is Ras-GEF domain-containing family member 1A (rasgef1a).